The following is a 359-amino-acid chain: Peptide chain release factor 1 (359 aa).

Gln-235 carries the N5-methylglutamine modification.

It belongs to the prokaryotic/mitochondrial release factor family. Post-translationally, methylated by PrmC. Methylation increases the termination efficiency of RF1.

The protein resides in the cytoplasm. In terms of biological role, peptide chain release factor 1 directs the termination of translation in response to the peptide chain termination codons UAG and UAA. This chain is Peptide chain release factor 1, found in Polynucleobacter asymbioticus (strain DSM 18221 / CIP 109841 / QLW-P1DMWA-1) (Polynucleobacter necessarius subsp. asymbioticus).